A 504-amino-acid polypeptide reads, in one-letter code: Glutamate--tRNA ligase (504 aa).

A 'HIGH' region motif is present at residues 25–35; that stretch reads PSPTGNPHVGL. Cys122, Cys124, Cys149, and Glu151 together coordinate Zn(2+). Positions 270–274 match the 'KMSKS' region motif; sequence KLSKR. Residue Lys273 participates in ATP binding.

The protein belongs to the class-I aminoacyl-tRNA synthetase family. Glutamate--tRNA ligase type 1 subfamily. As to quaternary structure, monomer. Requires Zn(2+) as cofactor.

The protein resides in the cytoplasm. It catalyses the reaction tRNA(Glu) + L-glutamate + ATP = L-glutamyl-tRNA(Glu) + AMP + diphosphate. Catalyzes the attachment of glutamate to tRNA(Glu) in a two-step reaction: glutamate is first activated by ATP to form Glu-AMP and then transferred to the acceptor end of tRNA(Glu). This Streptomyces avermitilis (strain ATCC 31267 / DSM 46492 / JCM 5070 / NBRC 14893 / NCIMB 12804 / NRRL 8165 / MA-4680) protein is Glutamate--tRNA ligase.